Consider the following 508-residue polypeptide: MGLPWYRVHTVVLNDPGRLLSVHIMHTALVAGWAGSMALYELAVFDPSDPVLDPMWRQGMFVIPFMTRLGITNSWGGWNITGGTITNPGLWSYEGVAGAHIVFSGLCFLAAIWHWVYWDLEIFCDERTGKPSLDLPKIFGIHLFLSGVACFGFGAFHVTGLYGPGIWVSDPYGLTGKVQPVNPAWGVEGFDPFVPGGIASHHIAAGTLGILAGLFHLSVRPPQRLYKGLRMGNIETVLSSSIAAVFFAAFVVAGTMWYGSATTPIELFGPTRYQWDQGYFQQEIYRRVSAGLAENQSLSEAWSKIPEKLAFYDYIGNNPAKGGLFRAGSMDNGDGIAVGWLGHPVFRNKEGRELFVRRMPTFFETFPVVLVDGDGIVRADVPFRRAESKYSVEQVGVTVEFYGGELNGVSYSDPATVKKYARRAQLGEIFELDRATLKSDGVFRSSPRGWFTFGHASFALLFFFGHIWHGSRTLFRDVFAGIDPDLDAQVEFGAFQKLGDPTTKRQAV.

Helical transmembrane passes span 21 to 36 (SVHI…WAGS), 101 to 115 (IVFS…IWHW), 140 to 156 (GIHL…FGAF), 203 to 218 (IAAG…FHLS), 237 to 252 (VLSS…AFVV), and 457 to 472 (SFAL…HGSR).

The protein belongs to the PsbB/PsbC family. PsbB subfamily. As to quaternary structure, PSII is composed of 1 copy each of membrane proteins PsbA, PsbB, PsbC, PsbD, PsbE, PsbF, PsbH, PsbI, PsbJ, PsbK, PsbL, PsbM, PsbT, PsbX, PsbY, PsbZ, Psb30/Ycf12, at least 3 peripheral proteins of the oxygen-evolving complex and a large number of cofactors. It forms dimeric complexes. Binds multiple chlorophylls. PSII binds additional chlorophylls, carotenoids and specific lipids. serves as cofactor.

It localises to the plastid. The protein localises to the chloroplast thylakoid membrane. One of the components of the core complex of photosystem II (PSII). It binds chlorophyll and helps catalyze the primary light-induced photochemical processes of PSII. PSII is a light-driven water:plastoquinone oxidoreductase, using light energy to abstract electrons from H(2)O, generating O(2) and a proton gradient subsequently used for ATP formation. The chain is Photosystem II CP47 reaction center protein from Lepidium virginicum (Virginia pepperweed).